A 292-amino-acid polypeptide reads, in one-letter code: Small ribosomal subunit protein uS9m (292 aa).

A disordered region spans residues 273 to 292 (VERKKPGKRKARKMPTWVKR).

This sequence belongs to the universal ribosomal protein uS9 family.

The protein resides in the mitochondrion. In Kluyveromyces marxianus (Yeast), this protein is Small ribosomal subunit protein uS9m (MRPS9).